A 437-amino-acid chain; its full sequence is MTEQVVNVIGAGLAGSEAAWQIAKRGVKVRLYEMRPVKQTPAHHTDKFAELVCSNSLRANGLTNAVGVIKEEMRILDSVILKAADQCSVPAGGALAVDRHEFAGYVTEAVKNHPLVEVIHEEVTEIPEGITVIATGPLTSKALAEKIQGLTGLDYLYFYDAAAPIIEKDSIDMDKVYLKSRYDKGEAAYLNCPMTKEEFDRFRQALIEAEVVPLKEFEKEIYFEGCMPIEVMASRGEKTMLFGPMKPVGLEDPKTGKRPYAVVQLRQDDAAGTLYNIVGFQTHLKWGPQKEVLQLIPGLENVEIVRYGVMHRNTFINSPKVLEKTYQLREQKNIFFAGQMTGVEGYVESAGSGLIAGINAARLALGQEPIIFPFETALGSMARYITEAQSKNFQPMNVNFGIFPELPPGRRSKPERAEMHATRAISTIHNFVNSQTI.

Position 10 to 15 (10 to 15) interacts with FAD; it reads GAGLAG.

It belongs to the MnmG family. TrmFO subfamily. FAD serves as cofactor.

The protein localises to the cytoplasm. It catalyses the reaction uridine(54) in tRNA + (6R)-5,10-methylene-5,6,7,8-tetrahydrofolate + NADH + H(+) = 5-methyluridine(54) in tRNA + (6S)-5,6,7,8-tetrahydrofolate + NAD(+). It carries out the reaction uridine(54) in tRNA + (6R)-5,10-methylene-5,6,7,8-tetrahydrofolate + NADPH + H(+) = 5-methyluridine(54) in tRNA + (6S)-5,6,7,8-tetrahydrofolate + NADP(+). Catalyzes the folate-dependent formation of 5-methyl-uridine at position 54 (M-5-U54) in all tRNAs. The chain is Methylenetetrahydrofolate--tRNA-(uracil-5-)-methyltransferase TrmFO from Lysinibacillus sphaericus (strain C3-41).